The chain runs to 127 residues: Lymphocyte antigen 6D (127 aa).

The N-terminal stretch at 1-20 (MKTALLVLLVLAVATSPAWA) is a signal peptide. The 88-residue stretch at 21 to 108 (LRCHVCTNSA…AAPGHALLSS (88 aa)) folds into the UPAR/Ly6 domain. 5 disulfide bridges follow: C23–C45, C26–C32, C38–C63, C67–C86, and C87–C92. The GPI-anchor amidated serine moiety is linked to residue S98. A propeptide spans 99-127 (AAPGHALLSSVTLGLATSLSLLTVMALCL) (removed in mature form).

In terms of tissue distribution, lymphoid cells lacking Ly6d, called ALP (all-lymphoid progenitor), retain full lymphoid potential and early thymic seeding activity, whereas cells containing Ly6d, called BLP (B-cell-biased lymphoid progenitor), up-regulate the B-cell specifying factors Ebf1 and Pax5 and behave essentially as B-cell progenitors (at protein level). Thymocytes and B-cells.

The protein resides in the cell membrane. May act as a specification marker at earliest stage specification of lymphocytes between B- and T-cell development. Marks the earliest stage of B-cell specification. This chain is Lymphocyte antigen 6D (Ly6d), found in Mus musculus (Mouse).